Here is a 484-residue protein sequence, read N- to C-terminus: Cytochrome P450 monooxygenase poxD (484 aa).

Residues 2–24 (VSPVVLATTAMIVVFLLAQRYLS) form a helical membrane-spanning segment. Cysteine 429 is a heme binding site.

It belongs to the cytochrome P450 family. Heme is required as a cofactor.

Its subcellular location is the membrane. It functions in the pathway secondary metabolite biosynthesis. Its function is as follows. Cytochrome P450 monooxygenase; part of the gene cluster that mediates the biosynthesis of oxaleimides, cytotoxic compounds containing an unusual disubstituted succinimide moiety. The first step of the pathway is provided by the HR-PKS poxF that serves in a new mode of collaborative biosynthesis with the PKS-NRPS poxE, by providing the olefin containing amino acid substrate via the synthesis of an ACP-bound dec-4-enoate. The cytochrome P450 monooxygenase poxM-catalyzed oxidation at the alpha-position creates the enzyme-bound 2-hydroxydec-4-enoyl-ACP thioester, which may be prone to spontaneous hydrolysis to yield 2-hydroxydec-4-enoic acid due to increased electrophilicity of the carbonyl. 2-hydroxydec-4-enoic acid can then be further oxidized by poxM to yield the alpha-ketoacid 2-oxodec-4-enoicacid, which is reductively aminated by the aminotransferase poxL to yield (S,E)-2-aminodec-4-enoic acid. The Hybrid PKS-NRPS synthetase poxE then performs condensation between the octaketide product of its PKS modules and the amino group of (S,E)-2-aminodec-4-enoic acid which is activated and incorporated by the adenylation domain. The resulting aminoacyl product can be cyclized by the Diels-Alderase PoxQ and reductively released by the reductive (R) domain of poxE to yield an aldehyde intermediate. The released aldehyde is then substrate for a Knoevenagel condensation by the hydrolyase poxO followed by an oxidation at the 5-position of the pyrrolidone ring. The presence of the olefin from the amino acid building block allows for migration of the substituted allyl group to occur. This allylic transposition reaction takes place in a conjugate addition, semipinacol-like fashion to yield a succinimide intermediate. Iterative two-electron oxidations of the C7 methyl of the succinimide intermediate to the carboxylic acid can be catalyzed by one of two remaining cytochrome P450 monooxygenasess poxC or poxD to yield oxaleimide A. Subsequent oxidation yields the maleimide scaffold oxaleimide I. Both oxaleimide A and oxaleimide I can undergo oxidative modifications in the decalin ring to yield the series of products oxaleimides B to H. The polypeptide is Cytochrome P450 monooxygenase poxD (Penicillium oxalicum).